We begin with the raw amino-acid sequence, 231 residues long: Small ribosomal subunit protein uS3 (231 aa).

Residues 39–107 (IRELLHKELK…DVVINIVEIR (69 aa)) enclose the KH type-2 domain.

The protein belongs to the universal ribosomal protein uS3 family. As to quaternary structure, part of the 30S ribosomal subunit. Forms a tight complex with proteins S10 and S14.

Its function is as follows. Binds the lower part of the 30S subunit head. Binds mRNA in the 70S ribosome, positioning it for translation. The polypeptide is Small ribosomal subunit protein uS3 (Nitrobacter hamburgensis (strain DSM 10229 / NCIMB 13809 / X14)).